Here is a 547-residue protein sequence, read N- to C-terminus: Chaperonin GroEL (547 aa).

Residues 30–33 (TLGP), lysine 51, 87–91 (DGTTT), glycine 415, 479–481 (NAA), and aspartate 495 each bind ATP.

Belongs to the chaperonin (HSP60) family. In terms of assembly, forms a cylinder of 14 subunits composed of two heptameric rings stacked back-to-back. Interacts with the co-chaperonin GroES.

The protein localises to the cytoplasm. The catalysed reaction is ATP + H2O + a folded polypeptide = ADP + phosphate + an unfolded polypeptide.. Functionally, together with its co-chaperonin GroES, plays an essential role in assisting protein folding. The GroEL-GroES system forms a nano-cage that allows encapsulation of the non-native substrate proteins and provides a physical environment optimized to promote and accelerate protein folding. This chain is Chaperonin GroEL, found in Acinetobacter baumannii (strain ACICU).